A 115-amino-acid polypeptide reads, in one-letter code: Large ribosomal subunit protein bL20 (115 aa).

It belongs to the bacterial ribosomal protein bL20 family.

Its function is as follows. Binds directly to 23S ribosomal RNA and is necessary for the in vitro assembly process of the 50S ribosomal subunit. It is not involved in the protein synthesizing functions of that subunit. This Borrelia turicatae (strain 91E135) protein is Large ribosomal subunit protein bL20.